The chain runs to 994 residues: Alpha-mannosidase F (994 aa).

A signal peptide spans 1–20 (MKNFYYFILILLFFNEVCYS). Residues His-35, Asp-37, and Asp-151 each coordinate Zn(2+). Asp-151 serves as the catalytic Nucleophile. Asn-247 and Asn-381 each carry an N-linked (GlcNAc...) asparagine glycan. Residue His-392 participates in Zn(2+) binding. 3 N-linked (GlcNAc...) asparagine glycosylation sites follow: Asn-554, Asn-712, and Asn-932.

This sequence belongs to the glycosyl hydrolase 38 family. Zn(2+) serves as cofactor.

The protein localises to the secreted. The catalysed reaction is Hydrolysis of terminal, non-reducing alpha-D-mannose residues in alpha-D-mannosides.. This chain is Alpha-mannosidase F (manF), found in Dictyostelium discoideum (Social amoeba).